We begin with the raw amino-acid sequence, 334 residues long: N-acetyl-gamma-glutamyl-phosphate reductase (334 aa).

Cys149 is a catalytic residue.

The protein belongs to the NAGSA dehydrogenase family. Type 1 subfamily.

The protein localises to the cytoplasm. It catalyses the reaction N-acetyl-L-glutamate 5-semialdehyde + phosphate + NADP(+) = N-acetyl-L-glutamyl 5-phosphate + NADPH + H(+). Its pathway is amino-acid biosynthesis; L-arginine biosynthesis; N(2)-acetyl-L-ornithine from L-glutamate: step 3/4. In terms of biological role, catalyzes the NADPH-dependent reduction of N-acetyl-5-glutamyl phosphate to yield N-acetyl-L-glutamate 5-semialdehyde. In Sulfurimonas denitrificans (strain ATCC 33889 / DSM 1251) (Thiomicrospira denitrificans (strain ATCC 33889 / DSM 1251)), this protein is N-acetyl-gamma-glutamyl-phosphate reductase.